A 332-amino-acid chain; its full sequence is Melanocortin receptor 4 (332 aa).

Topologically, residues 1 to 43 are extracellular; it reads MNSTQPLGMHTSLHSWNRSAHGMPTNVSESLAKGYSDGGCYEQ. Residues asparagine 2, asparagine 17, and asparagine 26 are each glycosylated (N-linked (GlcNAc...) asparagine). Cystine bridges form between cysteine 40–cysteine 279 and cysteine 271–cysteine 277. A helical transmembrane segment spans residues 44–69; it reads LFVSPEVFVTLGVISLLENILVIVAI. Residues 70–81 lie on the Cytoplasmic side of the membrane; the sequence is AKNKNLHSPMYF. A helical membrane pass occupies residues 82 to 106; sequence FICSLAVADMLVSVSNGSETIVITL. Ca(2+) contacts are provided by glutamate 100, aspartate 122, and aspartate 126. Topologically, residues 107–123 are extracellular; that stretch reads LNSTDTDAQSFTVDIDN. The chain crosses the membrane as a helical span at residues 124–145; sequence VIDSVICSSLLASICSLLSIAV. Residues 146 to 165 are Cytoplasmic-facing; the sequence is DRYFTIFYALQYHNIMTVKR. Residues 166 to 186 traverse the membrane as a helical segment; the sequence is VAITISAIWAACTVSGVLFII. Residues 187–191 lie on the Extracellular side of the membrane; it reads YSDSS. The chain crosses the membrane as a helical span at residues 192-215; that stretch reads AVIICLITVFFTMLALMASLYVHM. Topologically, residues 216–248 are cytoplasmic; it reads FLMARLHIKRIAVLPGSGTIRQGANMKGAITLT. Residues 249 to 271 traverse the membrane as a helical segment; that stretch reads ILIGVFVVCWAPFFLHLIFYISC. Residues 272–280 lie on the Extracellular side of the membrane; sequence PQNPYCVCF. Residues 281 to 304 traverse the membrane as a helical segment; the sequence is MSHFNLYLILIMCNSIIDPLIYAL. The Cytoplasmic portion of the chain corresponds to 305 to 332; that stretch reads RSQELRKTFKEIICCSPLGGLCDLSSRY. The S-palmitoyl cysteine moiety is linked to residue cysteine 318.

The protein belongs to the G-protein coupled receptor 1 family. As to quaternary structure, homodimer; disulfide-linked, also forms higher order oligomers. Interacts with GNAS. Interacts with ATRNL1. Interacts with MGRN1; this interaction competes with GNAS-binding and thus inhibits agonist-induced cAMP production. Interacts with MRAP and MRAP2; these associated factors increase ligand-sensitivity and generation of cAMP.

The protein localises to the cell membrane. Its function is as follows. Hormone receptor that acts as a key component of the leptin-melanocortin pathway at the intersection of homeostatic maintenance of energetic state. Plays a role in regulating food intake: activation by a stimulating hormone such as anorexigenic alpha-melanocyte stimulating hormone (alpha-MSH) inhibits appetite, whereas binding to a natural antagonist like Agouti-related protein/AGRP promotes appetite. G-protein-coupled receptor that activates conventional Galphas signaling leading to induction of anorexogenic signaling in the hypothalamus to result in negative energy balance. Regulates the firing activity of neurons from the hypothalamus by alpha-MSH and AGRP independently of Galphas signaling by ligand-induced coupling of closure of inwardly rectifying potassium channel KCNJ13. In intestinal epithelial cells, plays a role in the inhibition of hepatic glucose production via nesfatin-1/NUCB2 leading to increased cyclic adenosine monophosphate (cAMP) levels and glucagon-like peptide 1 (GLP-1) secretion in the intestinal epithelium. The polypeptide is Melanocortin receptor 4 (MC4R) (Bos taurus (Bovine)).